Here is a 223-residue protein sequence, read N- to C-terminus: Ribonuclease 3 (223 aa).

The 131-residue stretch at Met1–Gly131 folds into the RNase III domain. Glu44 lines the Mg(2+) pocket. Residue Asp48 is part of the active site. Residues Asp117 and Glu120 each coordinate Mg(2+). Glu120 is an active-site residue. Positions Asp157–Asn220 constitute a DRBM domain.

Belongs to the ribonuclease III family. Homodimer. Requires Mg(2+) as cofactor.

The protein localises to the cytoplasm. It carries out the reaction Endonucleolytic cleavage to 5'-phosphomonoester.. Its function is as follows. Digests double-stranded RNA. Involved in the processing of primary rRNA transcript to yield the immediate precursors to the large and small rRNAs (23S and 16S). Processes some mRNAs, and tRNAs when they are encoded in the rRNA operon. Processes pre-crRNA and tracrRNA of type II CRISPR loci if present in the organism. The sequence is that of Ribonuclease 3 from Tropheryma whipplei (strain Twist) (Whipple's bacillus).